Consider the following 524-residue polypeptide: Excitatory amino acid transporter 3 (524 aa).

Residues 1 to 18 (MGKPARKGCDWKRFLRNN) are Cytoplasmic-facing. Residues 19-38 (WLLLSTVVAVVLGIVIGVLV) form a helical membrane-spanning segment. Residues 39–61 (REYSKLSNLEKFYFSFPGEILMR) are Extracellular-facing. The chain crosses the membrane as a helical span at residues 62–82 (MLKLVILPLIVSSMITGVATL). Residues 83–93 (DSNVSGKIGLR) are Cytoplasmic-facing. A helical transmembrane segment spans residues 94–114 (AVVYYFCTTLIAVILGIVLVV). 3 residues coordinate Na(+): tyrosine 98, threonine 101, and threonine 102. Over 115-205 (SIKPGVTQKV…KTKEYKVVGM (91 aa)) the chain is Extracellular. Asparagine 178 and asparagine 195 each carry an N-linked (GlcNAc...) asparagine glycan. Residues 206 to 229 (YSDGINVLGLIVFCLVLGIVIGRK) traverse the membrane as a helical segment. At 230 to 238 (WEKGQILVD) the chain is on the cytoplasmic side. The chain crosses the membrane as a helical span at residues 239–266 (FFNALSDATMKIVQIIMCYMPIGILFLI). Residues 267–286 (AGKIIEVEDWEIFRKLGLYM) lie on the Extracellular side of the membrane. The chain crosses the membrane as a helical span at residues 287–308 (ATVLSGLAIHSIVILPLIYFII). Residues 309 to 313 (VRKNP) are Cytoplasmic-facing. The discontinuously helical intramembrane region spans 314-344 (FQFAMGMAQALLTALMISSSSATLPVTFRCA). Residues serine 331 and serine 333 each contribute to the L-aspartate site. Topologically, residues 345-353 (EEKNRVDKR) are cytoplasmic. A helical membrane pass occupies residues 354-380 (ITRFVLPVGATINMDGTALYEAVAAVF). Positions 362, 364, 366, and 368 each coordinate Na(+). An L-aspartate-binding site is contributed by threonine 370. Residues 381-393 (IAQLNDLDLSVGQ) lie on the Extracellular side of the membrane. Positions 394 to 427 (IITISVTATAASIGAAGVPQPGLVTMVIVLSAVG) form an intramembrane region, discontinuously helical. 3 residues coordinate Na(+): serine 405, isoleucine 406, and alanine 408. Valine 411 lines the L-aspartate pocket. Residues 428–440 (LPAEDVTLIIAVD) lie on the Extracellular side of the membrane. A helical membrane pass occupies residues 441-462 (WLLDRFRTMVNVLGDAFGTGIV). Positions 447, 448, and 451 each coordinate L-aspartate. The Na(+) site is built by asparagine 451 and aspartate 455. Residues 463–524 (EKLSKKELEQ…TISFTQTSQF (62 aa)) are Cytoplasmic-facing. A phosphoserine mark is found at serine 517 and serine 522.

It belongs to the dicarboxylate/amino acid:cation symporter (DAACS) (TC 2.A.23) family. SLC1A1 subfamily. As to quaternary structure, homotrimer. Interacts with ARL6IP5. Interacts with RTN2 (via N-terminus); the interaction promotes cell surface expression of SLC1A1. Interacts with SORCS2; this interaction is important for normal expression at the cell membrane.

It localises to the cell membrane. The protein localises to the apical cell membrane. Its subcellular location is the synapse. The protein resides in the synaptosome. It is found in the early endosome membrane. It localises to the late endosome membrane. The protein localises to the recycling endosome membrane. It catalyses the reaction K(+)(in) + L-glutamate(out) + 3 Na(+)(out) + H(+)(out) = K(+)(out) + L-glutamate(in) + 3 Na(+)(in) + H(+)(in). The enzyme catalyses K(+)(in) + L-aspartate(out) + 3 Na(+)(out) + H(+)(out) = K(+)(out) + L-aspartate(in) + 3 Na(+)(in) + H(+)(in). The catalysed reaction is D-aspartate(out) + K(+)(in) + 3 Na(+)(out) + H(+)(out) = D-aspartate(in) + K(+)(out) + 3 Na(+)(in) + H(+)(in). It carries out the reaction K(+)(in) + L-cysteine(out) + 3 Na(+)(out) + H(+)(out) = K(+)(out) + L-cysteine(in) + 3 Na(+)(in) + H(+)(in). In terms of biological role, sodium-dependent, high-affinity amino acid transporter that mediates the uptake of L-glutamate and also L-aspartate and D-aspartate. Can also transport L-cysteine. Functions as a symporter that transports one amino acid molecule together with two or three Na(+) ions and one proton, in parallel with the counter-transport of one K(+) ion. Mediates Cl(-) flux that is not coupled to amino acid transport; this avoids the accumulation of negative charges due to aspartate and Na(+) symport. Plays an important role in L-glutamate and L-aspartate reabsorption in renal tubuli. Plays a redundant role in the rapid removal of released glutamate from the synaptic cleft, which is essential for terminating the postsynaptic action of glutamate. Contributes to glutathione biosynthesis and protection against oxidative stress via its role in L-glutamate and L-cysteine transport. Negatively regulated by ARL6IP5. The protein is Excitatory amino acid transporter 3 (SLC1A1) of Bos taurus (Bovine).